The primary structure comprises 305 residues: MSEVTRSLLQRWGASLRRGADFDSWGQLVEAIDEYQILARHLQKEAQAQHNNSEFTEEQKKTIGKIATCLELRSAALQSTQSQEEFKLEDLKKLEPILKNILTYNKEFPFDVQPIPLRRILAPGEEENLEFEEDEEGGAGAGPPDSFSARVPGTLLPRLPSEPGMTLLTIRIEKIGLKDAGQCIDPYITVSVKDLNGIDLTPVQDTPVASRKEDTYVHFNVDIELQKHVERLTKGAAIFFEFKHYKPKKRFTSTKCFAFMEMDEIKPGPIVIELYKKPTDFKRKKLQLLTKKPLYLHLHQSLHKE.

A coiled-coil region spans residues 27–62 (QLVEAIDEYQILARHLQKEAQAQHNNSEFTEEQKKT). Over residues 128 to 137 (NLEFEEDEEG) the composition is skewed to acidic residues. Positions 128-150 (NLEFEEDEEGGAGAGPPDSFSAR) are disordered. The interval 153-220 (GTLLPRLPSE…RKEDTYVHFN (68 aa)) is axin-binding. Residues 156–303 (LPRLPSEPGM…LYLHLHQSLH (148 aa)) form the C2 Aida-type domain.

This sequence belongs to the AIDA family. Interacts with AXIN1.

In terms of biological role, acts as a ventralizing factor during embryogenesis. Inhibits axin-mediated JNK activation by binding axin and disrupting axin homodimerization. This in turn antagonizes a Wnt/beta-catenin-independent dorsalization pathway activated by AXIN/JNK-signaling. The polypeptide is Axin interactor, dorsalization-associated protein (Aida) (Mus musculus (Mouse)).